Here is a 1114-residue protein sequence, read N- to C-terminus: Putative surface protein SAV2496/SAV2497 (1114 aa).

A signal peptide spans 1–50; sequence MRDKKGPVNKRVDFLSNKLNKYSIRKFTVGTASILIGSLMYLGTQQEAEA. 3 disordered regions span residues 76–116, 440–473, and 496–1088; these read TNKD…EDTP, KFNP…NPLT, and EYGP…TGLE. Basic and acidic residues-rich tracts occupy residues 96–116, 451–461, 505–523, 554–570, and 579–589; these read DTIE…EDTP, KVTREGQKGEK, GHRD…EEVP, and SIVE…RKFN. A G5 1 domain is found at 419–501; the sequence is SAKNNNRIRK…NELTEYGPET (83 aa). The G5 2 domain occupies 547-628; that stretch reads YGPVKGDSIV…NELTEYGPET (82 aa). The span at 590-604 shows a compositional bias: low complexity; it reads TTTPTLKNPLTGEII. 11 stretches are compositionally biased toward basic and acidic residues: residues 605–618, 632–650, 681–697, 706–716, 733–746, 760–778, 809–825, 834–844, 861–874, 918–929, and 946–965; these read SKGE…KDPI, GHRD…EEVP, SIVE…RKFN, KVTREGQKGEK, SKGE…KDPV, KVIEEPVDDVIK, and FETK…RVKQ. The G5 3 domain maps to 674 to 756; the sequence is YGPVKGDSIV…NELTEYGPET (83 aa). Residues 802-884 form the G5 4 domain; sequence YGPVKGDSIV…NELTEFGGEK (83 aa). The 83-residue stretch at 930 to 1012 folds into the G5 5 domain; that stretch reads HGPKTGTPET…DKIVEFGGEK (83 aa). Positions 968-982 are enriched in polar residues; the sequence is QPGSKTITTPITVNP. The span at 996–1026 shows a compositional bias: basic and acidic residues; the sequence is EITKQPVDKIVEFGGEKPKDPKGPENPEKPS. The LPXTG sorting signal signature appears at 1082-1086; that stretch reads LPKTG. Thr1085 carries the pentaglycyl murein peptidoglycan amidated threonine modification. Positions 1086–1114 are cleaved as a propeptide — removed by sortase; the sequence is GLESTQKGLIFSSIIGIAGLMLLARRRKN.

The protein localises to the secreted. The protein resides in the cell wall. The sequence is that of Putative surface protein SAV2496/SAV2497 from Staphylococcus aureus (strain Mu50 / ATCC 700699).